A 338-amino-acid chain; its full sequence is MSSLRLLISDSYDPWFNLAVEECIFRQMPTTQRVLFLWRNAETVVIGRAQNPWKECNTRRMEEDGIKLARRSSGGGAVFHDLGNTCFTFMAGKPEYDKSVSTQIVLDALSALGLKASASGRNDLVVETADGVRKVSGSAYRETKDRGFHHGTLLLNADLNRLADYLNPDIKKLQAKGITSVRSRVANLVELLPSVDHQVICQAVTQAFFDYFGEQCEPEIISPSAYPDLPGFSEQFARQSSWEWNFGQAPDFSHLLDNRFTWGGIELHFDVERGVIIRAQVYTDSLNPAPLEALACALQGTAYRPENMAATCQALITAFPEQQNELQELAEWLEQSLR.

The 188-residue stretch at 29–216 (PTTQRVLFLW…AFFDYFGEQC (188 aa)) folds into the BPL/LPL catalytic domain. ATP is bound by residues Arg71, 76-79 (GAVF), and Lys134. (R)-lipoate is bound at residue Lys134.

It belongs to the LplA family. As to quaternary structure, monomer.

Its subcellular location is the cytoplasm. The enzyme catalyses L-lysyl-[lipoyl-carrier protein] + (R)-lipoate + ATP = N(6)-[(R)-lipoyl]-L-lysyl-[lipoyl-carrier protein] + AMP + diphosphate + H(+). The protein operates within protein modification; protein lipoylation via exogenous pathway; protein N(6)-(lipoyl)lysine from lipoate: step 1/2. It participates in protein modification; protein lipoylation via exogenous pathway; protein N(6)-(lipoyl)lysine from lipoate: step 2/2. Functionally, catalyzes both the ATP-dependent activation of exogenously supplied lipoate to lipoyl-AMP and the transfer of the activated lipoyl onto the lipoyl domains of lipoate-dependent enzymes. The protein is Lipoate-protein ligase A of Pectobacterium carotovorum subsp. carotovorum (strain PC1).